The primary structure comprises 399 residues: Enolase (399 aa).

Gln-152 is a binding site for (2R)-2-phosphoglycerate. Glu-194 functions as the Proton donor in the catalytic mechanism. The Mg(2+) site is built by Asp-230, Glu-273, and Asp-301. Lys-326, Arg-355, Ser-356, and Lys-377 together coordinate (2R)-2-phosphoglycerate. Lys-326 serves as the catalytic Proton acceptor.

Belongs to the enolase family. The cofactor is Mg(2+).

The protein resides in the cytoplasm. It localises to the secreted. Its subcellular location is the cell surface. The enzyme catalyses (2R)-2-phosphoglycerate = phosphoenolpyruvate + H2O. It functions in the pathway carbohydrate degradation; glycolysis; pyruvate from D-glyceraldehyde 3-phosphate: step 4/5. Its function is as follows. Catalyzes the reversible conversion of 2-phosphoglycerate (2-PG) into phosphoenolpyruvate (PEP). It is essential for the degradation of carbohydrates via glycolysis. The polypeptide is Enolase (Methanocorpusculum labreanum (strain ATCC 43576 / DSM 4855 / Z)).